Here is a 446-residue protein sequence, read N- to C-terminus: 3-phosphoshikimate 1-carboxyvinyltransferase (446 aa).

3 residues coordinate 3-phosphoshikimate: Lys-21, Ser-22, and Arg-26. Phosphoenolpyruvate is bound at residue Lys-21. Gly-92 and Arg-120 together coordinate phosphoenolpyruvate. 3-phosphoshikimate is bound by residues Ser-165, Gln-166, Asp-308, and Lys-335. Residue Gln-166 coordinates phosphoenolpyruvate. Asp-308 acts as the Proton acceptor in catalysis. The phosphoenolpyruvate site is built by Arg-339, Arg-380, and Lys-406.

This sequence belongs to the EPSP synthase family. In terms of assembly, monomer.

It is found in the cytoplasm. It catalyses the reaction 3-phosphoshikimate + phosphoenolpyruvate = 5-O-(1-carboxyvinyl)-3-phosphoshikimate + phosphate. It participates in metabolic intermediate biosynthesis; chorismate biosynthesis; chorismate from D-erythrose 4-phosphate and phosphoenolpyruvate: step 6/7. In terms of biological role, catalyzes the transfer of the enolpyruvyl moiety of phosphoenolpyruvate (PEP) to the 5-hydroxyl of shikimate-3-phosphate (S3P) to produce enolpyruvyl shikimate-3-phosphate and inorganic phosphate. The chain is 3-phosphoshikimate 1-carboxyvinyltransferase from Chlamydia caviae (strain ATCC VR-813 / DSM 19441 / 03DC25 / GPIC) (Chlamydophila caviae).